The primary structure comprises 129 residues: MKTLQFFFLFCCWKAICCNSCELTNITIAIEKEECRFCISINTTWCAGHCYTRDLVYKDPARPNIQKTCTFKELVYETVRVPGCAHHADSLYTYPVATQCHCGKCDSDSTDCTVRGLGPSYCSFGEMKE.

The signal sequence occupies residues 1 to 20 (MKTLQFFFLFCCWKAICCNS). Disulfide bonds link Cys-21-Cys-69, Cys-35-Cys-84, Cys-38-Cys-122, Cys-46-Cys-100, Cys-50-Cys-102, and Cys-105-Cys-112. N-linked (GlcNAc...) asparagine glycosylation is found at Asn-25 and Asn-42.

It belongs to the glycoprotein hormones subunit beta family. Heterodimer. The active follitropin is a heterodimer composed of an alpha chain/CGA shared with other hormones and a unique beta chain/FSHB shown here.

It is found in the secreted. Its function is as follows. Together with the alpha chain CGA constitutes follitropin, the follicle-stimulating hormone, and provides its biological specificity to the hormone heterodimer. Binds FSHR, a G protein-coupled receptor, on target cells to activate downstream signaling pathways. Follitropin is involved in follicle development and spermatogenesis in reproductive organs. This Pan troglodytes (Chimpanzee) protein is Follitropin subunit beta (FSHB).